Reading from the N-terminus, the 475-residue chain is Ribulose bisphosphate carboxylase large chain (475 aa).

Positions 1 to 2 (MS) are excised as a propeptide. Position 3 is an N-acetylproline (Pro-3). Position 14 is an N6,N6,N6-trimethyllysine (Lys-14). Substrate-binding residues include Asn-123 and Thr-173. The Proton acceptor role is filled by Lys-175. Residue Lys-177 participates in substrate binding. Mg(2+) is bound by residues Lys-201, Asp-203, and Glu-204. Lys-201 is modified (N6-carboxylysine). The active-site Proton acceptor is the His-294. Substrate-binding residues include Arg-295, His-327, and Ser-379.

Belongs to the RuBisCO large chain family. Type I subfamily. In terms of assembly, heterohexadecamer of 8 large chains and 8 small chains; disulfide-linked. The disulfide link is formed within the large subunit homodimers. Mg(2+) is required as a cofactor. Post-translationally, the disulfide bond which can form in the large chain dimeric partners within the hexadecamer appears to be associated with oxidative stress and protein turnover.

Its subcellular location is the plastid. The protein localises to the chloroplast. The enzyme catalyses 2 (2R)-3-phosphoglycerate + 2 H(+) = D-ribulose 1,5-bisphosphate + CO2 + H2O. It catalyses the reaction D-ribulose 1,5-bisphosphate + O2 = 2-phosphoglycolate + (2R)-3-phosphoglycerate + 2 H(+). RuBisCO catalyzes two reactions: the carboxylation of D-ribulose 1,5-bisphosphate, the primary event in carbon dioxide fixation, as well as the oxidative fragmentation of the pentose substrate in the photorespiration process. Both reactions occur simultaneously and in competition at the same active site. This is Ribulose bisphosphate carboxylase large chain from Cerastium glomeratum (Sticky chickweed).